A 553-amino-acid polypeptide reads, in one-letter code: Peroxiredoxin-2A (553 aa).

The Thioredoxin domain maps to 4 to 160 (IDVGDFVPDG…LMKMTTTTMS (157 aa)). Cys51 acts as the Cysteine sulfenic acid (-SOH) intermediate in catalysis. Positions 156-201 (TTTMSNLPTDLLEEIISRVPRKYMRAVRLTCKRWNGMFKSQSFTKM) constitute an F-box domain.

It belongs to the peroxiredoxin family. Prx5 subfamily. In terms of assembly, monomer.

The enzyme catalyses [glutaredoxin]-dithiol + a hydroperoxide = [glutaredoxin]-disulfide + an alcohol + H2O. Thiol-specific peroxidase that catalyzes the reduction of hydrogen peroxide and organic hydroperoxides to water and alcohols, respectively. Plays a role in cell protection against oxidative stress by detoxifying peroxides. May be involved in intracellular redox signaling. The sequence is that of Peroxiredoxin-2A (PRXIIA) from Arabidopsis thaliana (Mouse-ear cress).